Here is a 319-residue protein sequence, read N- to C-terminus: Malate dehydrogenase (319 aa).

NAD(+) is bound by residues 10–15 (GAGNIG) and Asp34. Substrate contacts are provided by Arg83 and Arg89. NAD(+) is bound by residues Asn96 and 119 to 121 (ITN). Asn121 and Arg152 together coordinate substrate. The active-site Proton acceptor is the His176.

It belongs to the LDH/MDH superfamily. MDH type 3 family.

The catalysed reaction is (S)-malate + NAD(+) = oxaloacetate + NADH + H(+). Catalyzes the reversible oxidation of malate to oxaloacetate. This is Malate dehydrogenase from Francisella philomiragia subsp. philomiragia (strain ATCC 25017 / CCUG 19701 / FSC 153 / O#319-036).